Reading from the N-terminus, the 165-residue chain is MPRILGIDPGSRITGYGVVEGSGSAPRHVASGCVRLPTGPFPDRLRVLYRALSELLAQHRPEAAVVEQVFVSRNPDSALKLGQARGAAICACVNAGLPVAEYTPGEIKQALVGHGRAGKAQVGYMVRMLLRLDATPAEDAGDALAAALCHLHQADMQARLRRAGA.

Catalysis depends on residues D8, E67, and D139. Residues D8, E67, and D139 each contribute to the Mg(2+) site.

Belongs to the RuvC family. As to quaternary structure, homodimer which binds Holliday junction (HJ) DNA. The HJ becomes 2-fold symmetrical on binding to RuvC with unstacked arms; it has a different conformation from HJ DNA in complex with RuvA. In the full resolvosome a probable DNA-RuvA(4)-RuvB(12)-RuvC(2) complex forms which resolves the HJ. It depends on Mg(2+) as a cofactor.

It is found in the cytoplasm. It carries out the reaction Endonucleolytic cleavage at a junction such as a reciprocal single-stranded crossover between two homologous DNA duplexes (Holliday junction).. In terms of biological role, the RuvA-RuvB-RuvC complex processes Holliday junction (HJ) DNA during genetic recombination and DNA repair. Endonuclease that resolves HJ intermediates. Cleaves cruciform DNA by making single-stranded nicks across the HJ at symmetrical positions within the homologous arms, yielding a 5'-phosphate and a 3'-hydroxyl group; requires a central core of homology in the junction. The consensus cleavage sequence is 5'-(A/T)TT(C/G)-3'. Cleavage occurs on the 3'-side of the TT dinucleotide at the point of strand exchange. HJ branch migration catalyzed by RuvA-RuvB allows RuvC to scan DNA until it finds its consensus sequence, where it cleaves and resolves the cruciform DNA. In Alkalilimnicola ehrlichii (strain ATCC BAA-1101 / DSM 17681 / MLHE-1), this protein is Crossover junction endodeoxyribonuclease RuvC.